Here is a 520-residue protein sequence, read N- to C-terminus: Succinyl-CoA:3-ketoacid coenzyme A transferase 2A, mitochondrial (520 aa).

The N-terminal 39 residues, 1 to 39 (MAALRLLAWALPRGVSALRPPPALPHRLIRRYVSDRSGS), are a transit peptide targeting the mitochondrion. The interval 280–299 (ERLTTRDSKPAPGSKDNDPS) is disordered. The active-site 5-glutamyl coenzyme A thioester intermediate is Glu-342.

The protein belongs to the 3-oxoacid CoA-transferase family. In terms of assembly, homodimer.

It is found in the mitochondrion. The catalysed reaction is a 3-oxo acid + succinyl-CoA = a 3-oxoacyl-CoA + succinate. The protein operates within ketone metabolism; succinyl-CoA degradation; acetoacetyl-CoA from succinyl-CoA: step 1/1. Key enzyme for ketone body catabolism. Transfers the CoA moiety from succinate to acetoacetate. Formation of the enzyme-CoA intermediate proceeds via an unstable anhydride species formed between the carboxylate groups of the enzyme and substrate. Probably play and important roles in the energy metabolism of spermatozoa. The polypeptide is Succinyl-CoA:3-ketoacid coenzyme A transferase 2A, mitochondrial (Oxct2a) (Mus musculus (Mouse)).